The primary structure comprises 310 residues: MDRMCGFRSTEDYSEKATLMMPSDYQSLICSTTGDNQRLFGSDELATALSSELLPRIRKAEDNFSLSVIKSKIASHPLYPRLLQTYIDCQKVGAPMEIACILEEIQRENHVYKRDVAPLSCFGADPELDEFMETYCDILVKYKTDLARPFDEATTFINKIEMQLQNLCTGPASATALSDDGAVSSDEELREDDDIAADDSQQRSNDRDLKDQLLRKFGSHISSLKLEFSKKKKKGKLPREARQALLDWWNVHNKWPYPTEGDKISLAEETGLDQKQINNWFINQRKRHWKPSENMPFDMMDDSNETFFTE.

Positions 178–208 (SDDGAVSSDEELREDDDIAADDSQQRSNDRD) are disordered. Acidic residues predominate over residues 185–197 (SDEELREDDDIAA). Residues 208–228 (DLKDQLLRKFGSHISSLKLEF) form the ELK domain. A DNA-binding region (homeobox; TALE-type) is located at residues 229 to 292 (SKKKKKGKLP…NQRKRHWKPS (64 aa)).

This sequence belongs to the TALE/KNOX homeobox family. May form heterodimeric complex with the TALE/BELL protein BEL1, BLH1 and BLH2. Interacts with OFP12 and OFP14. Interacts with BZIP30. Expressed predominantly in shoot apices of seedlings, in the receptacle and developing pistil of flowers and in axillary buds of inflorescence stems.

It localises to the nucleus. Its function is as follows. May play a role in meristem function, and may be involved in maintaining cells in an undifferentiated, meristematic state. Probably binds to the DNA sequence 5'-TGAC-3'. The chain is Homeobox protein knotted-1-like 2 (KNAT2) from Arabidopsis thaliana (Mouse-ear cress).